Consider the following 140-residue polypeptide: Nucleoside diphosphate kinase (140 aa).

Residues Lys11, Phe59, Arg87, Thr93, Arg104, and Asn114 each coordinate ATP. His117 (pros-phosphohistidine intermediate) is an active-site residue.

Belongs to the NDK family. As to quaternary structure, homotetramer. The cofactor is Mg(2+).

The protein localises to the cytoplasm. It carries out the reaction a 2'-deoxyribonucleoside 5'-diphosphate + ATP = a 2'-deoxyribonucleoside 5'-triphosphate + ADP. It catalyses the reaction a ribonucleoside 5'-diphosphate + ATP = a ribonucleoside 5'-triphosphate + ADP. Functionally, major role in the synthesis of nucleoside triphosphates other than ATP. The ATP gamma phosphate is transferred to the NDP beta phosphate via a ping-pong mechanism, using a phosphorylated active-site intermediate. The protein is Nucleoside diphosphate kinase of Sinorhizobium medicae (strain WSM419) (Ensifer medicae).